Here is a 377-residue protein sequence, read N- to C-terminus: Unsaturated 3S-rhamnoglycuronyl hydrolase (377 aa).

Residues 1 to 25 (MKNQALKILTLCVLVGSAMSLKLYA) form the signal peptide. The active-site Proton donor is D161.

The protein belongs to the glycosyl hydrolase 105 family.

Its subcellular location is the periplasm. In terms of biological role, unsaturated beta-glucuronyl hydrolase involved in ulvan degradation. Ulvan is the main polysaccharide component of the Ulvales (green seaweed) cell wall. It is composed of disaccharide building blocks comprising 3-sulfated rhamnose (Rha3S) linked to D-glucuronic acid (GlcA), L-iduronic acid (IduA), or D-xylose (Xyl). Unsaturated 3S-rhamnoglycuronyl hydrolase works together with ulvan lyases to fully degrade the ulvan polymer, catalyzing specifically the cleavage of the unsaturated 4-deoxy-L-threo-hex-4-enopyranosiduronic acid (deltaUA) of deltaUA-Rha3S disaccharides and deltaUA-Rha3S-Xyl-Rha3S tetrasaccharides, the end products of the ulvan lyase reaction. Also hydrolases deltaUA-Rha3S-IduA-Rha3S and deltaUA-Rha3S-GlcA-Rha3S tetrasaccharidestetrasaccharides. Prefers tetrasaccharides over disaccharides and prefers an uronic residue at subsite +2. The polypeptide is Unsaturated 3S-rhamnoglycuronyl hydrolase (Formosa agariphila (strain DSM 15362 / KCTC 12365 / LMG 23005 / KMM 3901 / M-2Alg 35-1)).